The chain runs to 930 residues: Isoleucine--tRNA ligase (930 aa).

The short motif at 57–67 (PYANGNIHVGH) is the 'HIGH' region element. E554 lines the L-isoleucyl-5'-AMP pocket. A 'KMSKS' region motif is present at residues 595–599 (KMSKS). K598 provides a ligand contact to ATP. C888, C891, C908, and C911 together coordinate Zn(2+).

The protein belongs to the class-I aminoacyl-tRNA synthetase family. IleS type 1 subfamily. Monomer. Requires Zn(2+) as cofactor.

The protein localises to the cytoplasm. It catalyses the reaction tRNA(Ile) + L-isoleucine + ATP = L-isoleucyl-tRNA(Ile) + AMP + diphosphate. In terms of biological role, catalyzes the attachment of isoleucine to tRNA(Ile). As IleRS can inadvertently accommodate and process structurally similar amino acids such as valine, to avoid such errors it has two additional distinct tRNA(Ile)-dependent editing activities. One activity is designated as 'pretransfer' editing and involves the hydrolysis of activated Val-AMP. The other activity is designated 'posttransfer' editing and involves deacylation of mischarged Val-tRNA(Ile). The polypeptide is Isoleucine--tRNA ligase (Streptococcus pneumoniae serotype 19F (strain G54)).